A 310-amino-acid polypeptide reads, in one-letter code: tRNA dimethylallyltransferase (310 aa).

Residue 14 to 21 (GPTASGKS) coordinates ATP. 16-21 (TASGKS) lines the substrate pocket. 2 interaction with substrate tRNA regions span residues 39-42 (DSMQ) and 163-167 (QRIVR).

It belongs to the IPP transferase family. As to quaternary structure, monomer. Mg(2+) is required as a cofactor.

It carries out the reaction adenosine(37) in tRNA + dimethylallyl diphosphate = N(6)-dimethylallyladenosine(37) in tRNA + diphosphate. Functionally, catalyzes the transfer of a dimethylallyl group onto the adenine at position 37 in tRNAs that read codons beginning with uridine, leading to the formation of N6-(dimethylallyl)adenosine (i(6)A). This chain is tRNA dimethylallyltransferase, found in Brucella ovis (strain ATCC 25840 / 63/290 / NCTC 10512).